We begin with the raw amino-acid sequence, 495 residues long: Ribose import ATP-binding protein RbsA (495 aa).

2 consecutive ABC transporter domains span residues 7–242 (LEMR…VGRP) and 250–491 (ERDI…TGVN). 39 to 46 (GENGAGKS) contacts ATP.

It belongs to the ABC transporter superfamily. Ribose importer (TC 3.A.1.2.1) family. As to quaternary structure, the complex is composed of an ATP-binding protein (RbsA), two transmembrane proteins (RbsC) and a solute-binding protein (RbsB).

It localises to the cell inner membrane. The catalysed reaction is D-ribose(out) + ATP + H2O = D-ribose(in) + ADP + phosphate + H(+). Part of the ABC transporter complex RbsABC involved in ribose import. Responsible for energy coupling to the transport system. In Shigella dysenteriae serotype 1 (strain Sd197), this protein is Ribose import ATP-binding protein RbsA.